The chain runs to 64 residues: Large ribosomal subunit protein bL28 (64 aa).

The protein belongs to the bacterial ribosomal protein bL28 family.

In Campylobacter jejuni subsp. jejuni serotype O:6 (strain 81116 / NCTC 11828), this protein is Large ribosomal subunit protein bL28.